We begin with the raw amino-acid sequence, 88 residues long: Small ribosomal subunit protein bS18B (88 aa).

The protein belongs to the bacterial ribosomal protein bS18 family. Part of the 30S ribosomal subunit. Forms a tight heterodimer with protein bS6.

In terms of biological role, binds as a heterodimer with protein bS6 to the central domain of the 16S rRNA, where it helps stabilize the platform of the 30S subunit. The chain is Small ribosomal subunit protein bS18B from Mycolicibacterium paratuberculosis (strain ATCC BAA-968 / K-10) (Mycobacterium paratuberculosis).